Consider the following 106-residue polypeptide: UPF0060 membrane protein Oant_2511 (106 aa).

4 helical membrane passes run 3 to 23, 30 to 50, 60 to 80, and 84 to 104; these read FAIY…FWAW, PLWL…LTLI, AAYG…AEGA, and RWDV…LFAP.

This sequence belongs to the UPF0060 family.

Its subcellular location is the cell inner membrane. The protein is UPF0060 membrane protein Oant_2511 of Brucella anthropi (strain ATCC 49188 / DSM 6882 / CCUG 24695 / JCM 21032 / LMG 3331 / NBRC 15819 / NCTC 12168 / Alc 37) (Ochrobactrum anthropi).